Consider the following 609-residue polypeptide: Sterol O-acyltransferase 2 (609 aa).

Positions 1–15 are enriched in polar residues; that stretch reads MGRTNTSDQLNAISD. The interval 1–41 is disordered; the sequence is MGRTNTSDQLNAISDKNTKRKSLALDNEYHNNSSSEDDSSK. Helical transmembrane passes span 152-172, 195-215, 229-249, 253-273, 402-422, and 451-471; these read FFGM…NNLI, LFKV…AFFV, VGWW…LWIA, CLDF…VFIM, WSYV…MILI, and FLLM…FFLI. The FYXDWWN motif signature appears at 490-496; the sequence is FYGPWWS. 2 consecutive transmembrane segments (helical) span residues 534–554 and 589–609; these read AAII…YVIF and IICW…YLVF. Residue histidine 546 is part of the active site.

This sequence belongs to the membrane-bound acyltransferase family. Sterol o-acyltransferase subfamily.

The protein resides in the endoplasmic reticulum membrane. Its activity is regulated as follows. Inhibited by the protoberberine derivative HWY-289 in a non-competitive manner. Inhibited by miconazole. Not inhibited by CI-976, polyoxin D, amphotericin B or nikkomycin Z. Functionally, sterol O-acyltransferase that catalyzes the formation of stery esters. In Candida albicans (Yeast), this protein is Sterol O-acyltransferase 2.